A 337-amino-acid chain; its full sequence is MSKINLLLLCGGGSAEHDISLMSANYFETSLAKSEQFSVLRVELDKFGQYRTAAGDDCELTNSREIRFRDESKTPWPVDYVIPCIHGYPGETGDIQSYFNLIQLPYFGCESEASSNCFNKITAKMWFSALGIPNTPYIFLNQFDDAAIEQTQAALAQWGSIFVKAASQGSSVGCYKVDDSDKVAGVLKDAFGYAPYVIVEKTIKARELEVAVYEYNGEVVATVPGEIICDTNTFYTFDEKYAKNSKARTDVVAQHVSAEISEQIRAYAIKAFKGMKLRHLSRIDFFLTADNEILLNEINTFPGSTPISMFPKMLQNHGHDFTEYLSLVINGQLTAKS.

One can recognise an ATP-grasp domain in the interval 124 to 330 (KMWFSALGIP…FTEYLSLVIN (207 aa)). Residue 154–209 (ALAQWGSIFVKAASQGSSVGCYKVDDSDKVAGVLKDAFGYAPYVIVEKTIKARELE) coordinates ATP. Mg(2+)-binding residues include aspartate 284, glutamate 297, and asparagine 299.

Belongs to the D-alanine--D-alanine ligase family. Requires Mg(2+) as cofactor. Mn(2+) is required as a cofactor.

Its subcellular location is the cytoplasm. It catalyses the reaction 2 D-alanine + ATP = D-alanyl-D-alanine + ADP + phosphate + H(+). It functions in the pathway cell wall biogenesis; peptidoglycan biosynthesis. Its function is as follows. Cell wall formation. This is D-alanine--D-alanine ligase from Shewanella baltica (strain OS195).